We begin with the raw amino-acid sequence, 215 residues long: MKASSSLPDGVQRRQFDNRSRLTTHGTTVYGEPRDTDGWRLWDAGRSKLGAMFKLDIETGLTGGESILYLGAASGTTVSHVADFAGPTYAIEFAPRPVRDLLEVATTRPNLIPLLCDARQPETYAHVVETDIEYLIQDVATRGQATVALRNRQFLAPDGKLILMIKARSEDVLSDPEDVFDTIISTLREGYIIQTRQRLDRFHDDHLAVVATPNM.

The segment at 1–29 (MKASSSLPDGVQRRQFDNRSRLTTHGTTV) is disordered. Over residues 11 to 20 (VQRRQFDNRS) the composition is skewed to basic and acidic residues. S-adenosyl-L-methionine-binding positions include 76–77 (TT), 92–93 (EF), 117–118 (DA), and 138–141 (DVAT).

Belongs to the methyltransferase superfamily. Fibrillarin family. As to quaternary structure, interacts with nop5. Component of box C/D small ribonucleoprotein (sRNP) particles that contain rpl7ae, FlpA and nop5, plus a guide RNA.

In terms of biological role, involved in pre-rRNA and tRNA processing. Utilizes the methyl donor S-adenosyl-L-methionine to catalyze the site-specific 2'-hydroxyl methylation of ribose moieties in rRNA and tRNA. Site specificity is provided by a guide RNA that base pairs with the substrate. Methylation occurs at a characteristic distance from the sequence involved in base pairing with the guide RNA. The polypeptide is Fibrillarin-like rRNA/tRNA 2'-O-methyltransferase (Haloquadratum walsbyi (strain DSM 16790 / HBSQ001)).